Consider the following 207-residue polypeptide: Large ribosomal subunit protein uL4 (207 aa).

The tract at residues 48–89 is disordered; sequence THKVKNRSEVSGGGRKPWRQKGTGRARQGSIRSPQWRGGGTV.

Belongs to the universal ribosomal protein uL4 family. As to quaternary structure, part of the 50S ribosomal subunit.

One of the primary rRNA binding proteins, this protein initially binds near the 5'-end of the 23S rRNA. It is important during the early stages of 50S assembly. It makes multiple contacts with different domains of the 23S rRNA in the assembled 50S subunit and ribosome. Functionally, forms part of the polypeptide exit tunnel. The protein is Large ribosomal subunit protein uL4 of Bacillus cytotoxicus (strain DSM 22905 / CIP 110041 / 391-98 / NVH 391-98).